A 431-amino-acid chain; its full sequence is UDP-N-acetylmuramoylalanine--D-glutamate ligase (431 aa).

Position 111-117 (111-117) interacts with ATP; the sequence is GTDGKST.

Belongs to the MurCDEF family.

The protein localises to the cytoplasm. The enzyme catalyses UDP-N-acetyl-alpha-D-muramoyl-L-alanine + D-glutamate + ATP = UDP-N-acetyl-alpha-D-muramoyl-L-alanyl-D-glutamate + ADP + phosphate + H(+). The protein operates within cell wall biogenesis; peptidoglycan biosynthesis. In terms of biological role, cell wall formation. Catalyzes the addition of glutamate to the nucleotide precursor UDP-N-acetylmuramoyl-L-alanine (UMA). The protein is UDP-N-acetylmuramoylalanine--D-glutamate ligase of Petrotoga mobilis (strain DSM 10674 / SJ95).